Reading from the N-terminus, the 176-residue chain is Nucleoside triphosphate/diphosphate phosphatase (176 aa).

The active-site Proton donor is R23. Mg(2+)-binding residues include N87, D103, D105, D107, D120, and E123.

This sequence belongs to the Ntdp family. Requires Mg(2+) as cofactor.

The enzyme catalyses a ribonucleoside 5'-triphosphate + H2O = a ribonucleoside 5'-diphosphate + phosphate + H(+). It carries out the reaction a ribonucleoside 5'-diphosphate + H2O = a ribonucleoside 5'-phosphate + phosphate + H(+). In terms of biological role, has nucleoside phosphatase activity towards nucleoside triphosphates and nucleoside diphosphates. This is Nucleoside triphosphate/diphosphate phosphatase from Bacillus cereus (strain AH820).